The primary structure comprises 122 residues: Protein C10 (122 aa).

The protein belongs to the UPF0456 family.

Its subcellular location is the cytoplasm. This chain is Protein C10, found in Danio rerio (Zebrafish).